We begin with the raw amino-acid sequence, 190 residues long: Imidazoleglycerol-phosphate dehydratase (190 aa).

Belongs to the imidazoleglycerol-phosphate dehydratase family.

Its subcellular location is the cytoplasm. The catalysed reaction is D-erythro-1-(imidazol-4-yl)glycerol 3-phosphate = 3-(imidazol-4-yl)-2-oxopropyl phosphate + H2O. It functions in the pathway amino-acid biosynthesis; L-histidine biosynthesis; L-histidine from 5-phospho-alpha-D-ribose 1-diphosphate: step 6/9. The chain is Imidazoleglycerol-phosphate dehydratase from Nitratiruptor sp. (strain SB155-2).